A 146-amino-acid polypeptide reads, in one-letter code: Ribonuclease VapC41 (146 aa).

Positions leucine 3–arginine 142 constitute a PINc domain. Residues aspartate 5 and aspartate 112 each coordinate Mg(2+).

It belongs to the PINc/VapC protein family. It depends on Mg(2+) as a cofactor.

Its function is as follows. Toxic component of a type II toxin-antitoxin (TA) system. An RNase. Its toxic effect is neutralized by coexpression with cognate antitoxin VapB41. This is Ribonuclease VapC41 from Mycobacterium tuberculosis (strain CDC 1551 / Oshkosh).